The sequence spans 218 residues: Eukaryotic translation initiation factor 4E-1 (218 aa).

The segment at 1–39 (MAEETDTRPASAGSRGRPAPEDDDREEGEITDLACAPSP) is disordered. Residues 21 to 30 (EDDDREEGEI) are compositionally biased toward acidic residues. 2 EIF4G-binding regions span residues 43–46 (HPLE) and 53–89 (FDNP…NNIN). Residues 61 to 66 (KQAAWG), K93, and 111 to 112 (WE) each bind mRNA. A disulfide bond links C116 and C154. The tract at residues 137–146 (HTLLAMIGEQ) is EIF4G-binding. MRNA contacts are provided by residues 161–166 (RGKQER) and 206–210 (KKMDK).

This sequence belongs to the eukaryotic initiation factor 4E family. As to quaternary structure, EIF4F is a multi-subunit complex, the composition of which varies with external and internal environmental conditions. It is composed of at least EIF4A, EIF4E and EIF4G. EIF4E is also known to interact with other partners. In higher plants two isoforms of EIF4F have been identified, named isoform EIF4F and isoform EIF(iso)4F. Isoform EIF4F has subunits p220 and p26, whereas isoform EIF(iso)4F has subunits p82 and p28. Post-translationally, according to the redox status, the Cys-116-Cys-154 disulfide bridge may have a role in regulating protein function by affecting its ability to bind capped mRNA. Phosphorylated upon oxygen deprivation.

It is found in the nucleus. The protein localises to the cytoplasm. Functionally, component of the protein complex eIF4F, which is involved in the recognition of the mRNA cap, ATP-dependent unwinding of 5'-terminal secondary structure and recruitment of mRNA to the ribosome. Recognizes and binds the 7-methylguanosine-containing mRNA cap during an early step in the initiation of protein synthesis and facilitates ribosome binding by inducing the unwinding of the mRNAs secondary structures. This is Eukaryotic translation initiation factor 4E-1 from Zea mays (Maize).